A 545-amino-acid chain; its full sequence is Putative serine/threonine-protein kinase L673 (545 aa).

The region spanning Arg-13–Lys-125 is the Cyclin N-terminal domain. Positions Ile-264 to Phe-543 constitute a Protein kinase domain. Residues Leu-270–Val-278 and Lys-291 each bind ATP. Catalysis depends on Asp-384, which acts as the Proton acceptor.

The protein belongs to the protein kinase superfamily. Ser/Thr protein kinase family.

It catalyses the reaction L-seryl-[protein] + ATP = O-phospho-L-seryl-[protein] + ADP + H(+). It carries out the reaction L-threonyl-[protein] + ATP = O-phospho-L-threonyl-[protein] + ADP + H(+). The chain is Putative serine/threonine-protein kinase L673 from Acanthamoeba polyphaga (Amoeba).